Consider the following 131-residue polypeptide: Leptin receptor gene-related protein (131 aa).

The next 4 helical transmembrane spans lie at 7 to 27 (LVALSFSGAIGLTFLMLGCAL), 32 to 52 (VYWPLFVLVFHALSPIPHFIA), 69 to 89 (LAYFFTTGIVVSAFGFPVILA), and 100 to 120 (GLVLAGNAVIFLTIQGFFLVF).

The protein belongs to the OB-RGRP/VPS55 family. As to quaternary structure, interacts with LEPR. Interacts with RAB13.

The protein resides in the golgi apparatus membrane. The protein localises to the endosome membrane. Its function is as follows. Negatively regulates leptin receptor (LEPR) cell surface expression, and thus decreases response to leptin/LEP. Negatively regulates growth hormone (GH) receptor cell surface expression in liver. May play a role in liver resistance to GH during periods of reduced nutrient availability. This is Leptin receptor gene-related protein (LEPROT) from Sus scrofa (Pig).